A 191-amino-acid chain; its full sequence is Ribonuclease HII (191 aa).

The RNase H type-2 domain maps to 7 to 191 (ILMAGVDEVG…YSPVADLISK (185 aa)). Positions 13, 14, and 103 each coordinate a divalent metal cation.

This sequence belongs to the RNase HII family. The cofactor is Mn(2+). Mg(2+) is required as a cofactor.

The protein localises to the cytoplasm. The catalysed reaction is Endonucleolytic cleavage to 5'-phosphomonoester.. Functionally, endonuclease that specifically degrades the RNA of RNA-DNA hybrids. This chain is Ribonuclease HII, found in Legionella pneumophila subsp. pneumophila (strain Philadelphia 1 / ATCC 33152 / DSM 7513).